Consider the following 629-residue polypeptide: tRNA uridine 5-carboxymethylaminomethyl modification enzyme MnmG (629 aa).

FAD-binding positions include 13–18 (GGGHAG), valine 125, and serine 180. 273 to 287 (GPRYCPSIEDKVMRF) contacts NAD(+). Glutamine 370 contacts FAD.

Belongs to the MnmG family. As to quaternary structure, homodimer. Heterotetramer of two MnmE and two MnmG subunits. Requires FAD as cofactor.

The protein localises to the cytoplasm. In terms of biological role, NAD-binding protein involved in the addition of a carboxymethylaminomethyl (cmnm) group at the wobble position (U34) of certain tRNAs, forming tRNA-cmnm(5)s(2)U34. The polypeptide is tRNA uridine 5-carboxymethylaminomethyl modification enzyme MnmG (Psychromonas ingrahamii (strain DSM 17664 / CCUG 51855 / 37)).